We begin with the raw amino-acid sequence, 449 residues long: Telomere resolvase ResT (449 aa).

The cofactor is No cofactors were found to be necessary..

It is found in the cytoplasm. It localises to the nucleoid. Its function is as follows. Catalyzes the conservative, sequence-specific DNA breakage and reunion reaction that generates two hairpin telomeres from a replicated telomere substrate. Breaks two phosphodiester bonds in a single DNA duplex and joins each end with the opposite DNA strand to form covalently closed hairpin telomeres. In vitro relaxed-circular, open-circular and linearized plasmids, but not supercoiled DNA, are all substrates. Cleavage is position-dependent relative to conserved sequence elements. This chain is Telomere resolvase ResT, found in Borreliella burgdorferi (strain ATCC 35210 / DSM 4680 / CIP 102532 / B31) (Borrelia burgdorferi).